Here is a 38-residue protein sequence, read N- to C-terminus: Bacteriocin curvaticin FS47 (38 aa).

The protein resides in the secreted. Bacteriocin active against Listeria monocytogenes, Pediococcus, Enterococcus, Lactobacilli and Bacilli. The protein is Bacteriocin curvaticin FS47 of Latilactobacillus curvatus (Lactobacillus curvatus).